A 481-amino-acid polypeptide reads, in one-letter code: Argininosuccinate lyase (481 aa).

This sequence belongs to the lyase 1 family. Argininosuccinate lyase subfamily.

Its subcellular location is the cytoplasm. It carries out the reaction 2-(N(omega)-L-arginino)succinate = fumarate + L-arginine. It participates in amino-acid biosynthesis; L-arginine biosynthesis; L-arginine from L-ornithine and carbamoyl phosphate: step 3/3. This Methanococcus vannielii (strain ATCC 35089 / DSM 1224 / JCM 13029 / OCM 148 / SB) protein is Argininosuccinate lyase.